The following is an 832-amino-acid chain: Spindle pole body component alp6 (832 aa).

Residues 1–186 are interaction with mzt1; it reads MSEIHVKTAL…STETSSVQHT (186 aa). Position 286 is a phosphothreonine (T286).

Belongs to the TUBGCP family. Part of the gamma-tubulin complex. Interacts directly with mzt1. Interacts with mto1. Interacts with mto2.

It localises to the cytoplasm. It is found in the cytoskeleton. The protein resides in the microtubule organizing center. Its subcellular location is the spindle pole body. Component of the gamma tubule complex that is required for the regulation of both interphase microtubules and mitotic bipolar spindles. This Schizosaccharomyces pombe (strain 972 / ATCC 24843) (Fission yeast) protein is Spindle pole body component alp6 (alp6).